Reading from the N-terminus, the 119-residue chain is Ribonuclease P protein component (119 aa).

It belongs to the RnpA family. As to quaternary structure, consists of a catalytic RNA component (M1 or rnpB) and a protein subunit.

The catalysed reaction is Endonucleolytic cleavage of RNA, removing 5'-extranucleotides from tRNA precursor.. RNaseP catalyzes the removal of the 5'-leader sequence from pre-tRNA to produce the mature 5'-terminus. It can also cleave other RNA substrates such as 4.5S RNA. The protein component plays an auxiliary but essential role in vivo by binding to the 5'-leader sequence and broadening the substrate specificity of the ribozyme. In Listeria welshimeri serovar 6b (strain ATCC 35897 / DSM 20650 / CCUG 15529 / CIP 8149 / NCTC 11857 / SLCC 5334 / V8), this protein is Ribonuclease P protein component.